A 434-amino-acid chain; its full sequence is D-amino acid dehydrogenase (434 aa).

Residue 3–17 (VIVLGSGVIGTTTAY) participates in FAD binding.

The protein belongs to the DadA oxidoreductase family. FAD serves as cofactor.

The catalysed reaction is a D-alpha-amino acid + A + H2O = a 2-oxocarboxylate + AH2 + NH4(+). Its function is as follows. Oxidative deamination of D-amino acids. The chain is D-amino acid dehydrogenase from Bordetella parapertussis (strain 12822 / ATCC BAA-587 / NCTC 13253).